Reading from the N-terminus, the 249-residue chain is Proteasome subunit alpha (249 aa).

A disordered region spans residues 229-249 (EAREAEEAAEAQSSEDGGATD).

This sequence belongs to the peptidase T1A family. The 20S proteasome core is composed of 14 alpha and 14 beta subunits that assemble into four stacked heptameric rings, resulting in a barrel-shaped structure. The two inner rings, each composed of seven catalytic beta subunits, are sandwiched by two outer rings, each composed of seven alpha subunits. The catalytic chamber with the active sites is on the inside of the barrel. Has a gated structure, the ends of the cylinder being occluded by the N-termini of the alpha-subunits. Is capped by the proteasome-associated ATPase, ARC.

Its subcellular location is the cytoplasm. The protein operates within protein degradation; proteasomal Pup-dependent pathway. Its activity is regulated as follows. The formation of the proteasomal ATPase ARC-20S proteasome complex, likely via the docking of the C-termini of ARC into the intersubunit pockets in the alpha-rings, may trigger opening of the gate for substrate entry. Interconversion between the open-gate and close-gate conformations leads to a dynamic regulation of the 20S proteasome proteolysis activity. Its function is as follows. Component of the proteasome core, a large protease complex with broad specificity involved in protein degradation. This chain is Proteasome subunit alpha, found in Thermobifida fusca (strain YX).